We begin with the raw amino-acid sequence, 327 residues long: MPHLAELVAKARTAIEEAQDVAALENVRVEYLGKKGHLTLQMTSLRELPAEERPAAGAVINQAKQDVQDALNARKQTLESAELNARLAQETIDVSLPGRTIENGGLHPVTRTIDRIETFFGELGFSVVTGPEIEDDYHNFDALNIPGHHPARADHDTFWFDAKRLLRTQTSGVQIRTMEKQQPPIRIIAPGRVYRNDYDQTHTPMFHQMEGLIVDKDISFTNLKGTLHDFLRNFFEEDLQVRFRPSYFPFTEPSAEVDVMGKNGKWLEVLGCGMVHPNVLRNVGIDPEVYSGFAFGMGMERLTMLRYGVTDLRAFFENDLRFLKQFK.

Residue glutamate 252 participates in Mg(2+) binding.

The protein belongs to the class-II aminoacyl-tRNA synthetase family. Phe-tRNA synthetase alpha subunit type 1 subfamily. Tetramer of two alpha and two beta subunits. The cofactor is Mg(2+).

The protein resides in the cytoplasm. The catalysed reaction is tRNA(Phe) + L-phenylalanine + ATP = L-phenylalanyl-tRNA(Phe) + AMP + diphosphate + H(+). The chain is Phenylalanine--tRNA ligase alpha subunit from Pectobacterium atrosepticum (strain SCRI 1043 / ATCC BAA-672) (Erwinia carotovora subsp. atroseptica).